The chain runs to 345 residues: Phosphoribosylformylglycinamidine cyclo-ligase (345 aa).

It belongs to the AIR synthase family.

The protein localises to the cytoplasm. The enzyme catalyses 2-formamido-N(1)-(5-O-phospho-beta-D-ribosyl)acetamidine + ATP = 5-amino-1-(5-phospho-beta-D-ribosyl)imidazole + ADP + phosphate + H(+). The protein operates within purine metabolism; IMP biosynthesis via de novo pathway; 5-amino-1-(5-phospho-D-ribosyl)imidazole from N(2)-formyl-N(1)-(5-phospho-D-ribosyl)glycinamide: step 2/2. The polypeptide is Phosphoribosylformylglycinamidine cyclo-ligase (Escherichia coli O139:H28 (strain E24377A / ETEC)).